We begin with the raw amino-acid sequence, 232 residues long: GTP cyclohydrolase 1 (232 aa).

The disordered stretch occupies residues 1-24 (MSDNLKSYQDNHIENEDEEIYERS). Cys-121, His-124, and Cys-192 together coordinate Zn(2+).

The protein belongs to the GTP cyclohydrolase I family. Toroid-shaped homodecamer, composed of two pentamers of five dimers.

The catalysed reaction is GTP + H2O = 7,8-dihydroneopterin 3'-triphosphate + formate + H(+). Its pathway is cofactor biosynthesis; 7,8-dihydroneopterin triphosphate biosynthesis; 7,8-dihydroneopterin triphosphate from GTP: step 1/1. In terms of biological role, first enzyme in the biosynthesis of tetrahydrobiopterin (BH4). Catalyzes the conversion of GTP into dihydroneopterin triphosphate (7,8-dihydroneopterin 3'-triphosphate), which is subsequently catalyzed by 6-pyruvoyltetrahydropterin synthase (ptsA) and sepiapterin reductase (sprA). This is GTP cyclohydrolase 1 (gchA) from Dictyostelium discoideum (Social amoeba).